Reading from the N-terminus, the 544-residue chain is Chaperonin GroEL (544 aa).

ATP contacts are provided by residues 29–32 (TLGP), lysine 50, 86–90 (DGTTT), glycine 414, and aspartate 495.

Belongs to the chaperonin (HSP60) family. In terms of assembly, forms a cylinder of 14 subunits composed of two heptameric rings stacked back-to-back. Interacts with the co-chaperonin GroES.

Its subcellular location is the cytoplasm. It carries out the reaction ATP + H2O + a folded polypeptide = ADP + phosphate + an unfolded polypeptide.. Together with its co-chaperonin GroES, plays an essential role in assisting protein folding. The GroEL-GroES system forms a nano-cage that allows encapsulation of the non-native substrate proteins and provides a physical environment optimized to promote and accelerate protein folding. The polypeptide is Chaperonin GroEL (Treponema pallidum subsp. pallidum (strain SS14)).